Consider the following 229-residue polypeptide: Ribonuclease 3 (229 aa).

The 132-residue stretch at 5-136 (LAELERALGI…VIGAIYLDQG (132 aa)) folds into the RNase III domain. Glu-49 contributes to the Mg(2+) binding site. Asp-53 is a catalytic residue. 2 residues coordinate Mg(2+): Asp-122 and Glu-125. Glu-125 is a catalytic residue. Residues 161-229 (DPTTRLQEIV…AQAALADIDR (69 aa)) enclose the DRBM domain.

The protein belongs to the ribonuclease III family. In terms of assembly, homodimer. The cofactor is Mg(2+).

It is found in the cytoplasm. It carries out the reaction Endonucleolytic cleavage to 5'-phosphomonoester.. In terms of biological role, digests double-stranded RNA. Involved in the processing of primary rRNA transcript to yield the immediate precursors to the large and small rRNAs (23S and 16S). Processes some mRNAs, and tRNAs when they are encoded in the rRNA operon. Processes pre-crRNA and tracrRNA of type II CRISPR loci if present in the organism. The chain is Ribonuclease 3 from Chloroflexus aggregans (strain MD-66 / DSM 9485).